The primary structure comprises 245 residues: Biosynthetic peptidoglycan transglycosylase (245 aa).

The helical transmembrane segment at 20–42 threads the bilayer; that stretch reads VYAGSVFAGAWLATQLFYLAQIA.

The protein belongs to the glycosyltransferase 51 family.

The protein localises to the cell inner membrane. It catalyses the reaction [GlcNAc-(1-&gt;4)-Mur2Ac(oyl-L-Ala-gamma-D-Glu-L-Lys-D-Ala-D-Ala)](n)-di-trans,octa-cis-undecaprenyl diphosphate + beta-D-GlcNAc-(1-&gt;4)-Mur2Ac(oyl-L-Ala-gamma-D-Glu-L-Lys-D-Ala-D-Ala)-di-trans,octa-cis-undecaprenyl diphosphate = [GlcNAc-(1-&gt;4)-Mur2Ac(oyl-L-Ala-gamma-D-Glu-L-Lys-D-Ala-D-Ala)](n+1)-di-trans,octa-cis-undecaprenyl diphosphate + di-trans,octa-cis-undecaprenyl diphosphate + H(+). The protein operates within cell wall biogenesis; peptidoglycan biosynthesis. Peptidoglycan polymerase that catalyzes glycan chain elongation from lipid-linked precursors. This Burkholderia orbicola (strain MC0-3) protein is Biosynthetic peptidoglycan transglycosylase.